Here is a 457-residue protein sequence, read N- to C-terminus: uncharacterized protein (457 aa).

Residues 6-64 (PVHKGEVLDVTIMDLTYQGMGVAKVDNYPIFIENALPEEKITVKVTKTTKNFAFGDVEK) enclose the TRAM domain. Residues glutamine 287, tyrosine 316, glutamate 337, and aspartate 385 each contribute to the S-adenosyl-L-methionine site. Cysteine 412 acts as the Nucleophile in catalysis.

The protein belongs to the class I-like SAM-binding methyltransferase superfamily. RNA M5U methyltransferase family.

This is an uncharacterized protein from Lactiplantibacillus plantarum (strain ATCC BAA-793 / NCIMB 8826 / WCFS1) (Lactobacillus plantarum).